Reading from the N-terminus, the 146-residue chain is Hemoglobin subunit beta (146 aa).

The 145-residue stretch at 2 to 146 (HWSAEEKQLI…VAHALARKYH (145 aa)) folds into the Globin domain. 2 residues coordinate heme b: His63 and His92.

Belongs to the globin family. As to quaternary structure, heterotetramer of two alpha chains and two beta chains. As to expression, red blood cells.

Its function is as follows. Involved in oxygen transport from the lung to the various peripheral tissues. This Eudyptes chrysocome (Western rockhopper penguin) protein is Hemoglobin subunit beta (HBB).